Here is a 320-residue protein sequence, read N- to C-terminus: MRQTKTGILLANLGTPDAPTPEAVKRYLKQFLSDRRVVDTPRPLWWPLLRGVILPLRSPRVAKLYQSIWMDGGSPLMVYSREQQQGLAARLPDTPVALGMSYGSPSLESAVDELLASDVDHIVVLPLYPQYSCSTVGAVWDELGRILARKRRIPGISFIRDYADDGAYIDALAKSARESFARHGEPDLLLLSYHGIPQRYADEGDDYPQRCRDTTRELVSALGLPPEKVMMTFQSRFGREPWLTPYTDETLKMLGEKGTGHIQVMCPGFAADCLETLEEIAEQNREIFLEAGGKKYAYIPALNATPEHIDMMLKLTAPYR.

Residues histidine 194 and glutamate 275 each contribute to the Fe cation site.

It belongs to the ferrochelatase family. In terms of assembly, monomer.

The protein resides in the cytoplasm. The enzyme catalyses heme b + 2 H(+) = protoporphyrin IX + Fe(2+). It functions in the pathway porphyrin-containing compound metabolism; protoheme biosynthesis; protoheme from protoporphyrin-IX: step 1/1. In terms of biological role, catalyzes the ferrous insertion into protoporphyrin IX. The chain is Ferrochelatase from Salmonella arizonae (strain ATCC BAA-731 / CDC346-86 / RSK2980).